A 646-amino-acid polypeptide reads, in one-letter code: MAEDTGTNNEGTGCSGWFLVEAVVERTTGQQISDDEDETVEDSGLDMVDFIDDRPITHNSVEAQALLNEQEADAHYAAVQDLKRKYLGSPYVSPLGHVEQSVDCDISPRLDAIKLSRNSKKVKRRLFQSREITDSGYGYSEVEAETQVERNGEPENDCGGGGHGRDKEGEGQVHTEVHTGSQIEEHTGTTRVLELLKCKDVRATLYGKFKDCYGLSFTDLIRPFKSDKTTCGDWVVAAFGIHHSVSEAFEKLMQPLTTYMHIQWLTNAWGMVLLVLIRFKVNKSRCTVARTLATFLNIPEDHMLIEPPKIQSSVAALYWFRTGISNASIVTGETPEWIKRQTIVEHGLADNQFKLTEMVQWAYDNDFCDESEIAFEYAQRGDFDSNARAFLNSNCQAKYVKDCATMCKHYKNAEMKKMSMKQWITYRSKKIEEAGNWKPIVQFLRHQNIEFIPFLSKLKLWLHGTPKKNCIAIVGPPDTGKSCFCMSLIKFLGGTVISYVNSSSHFWLQPLCNAKVALLDDATQSCWVYMDTYMRNLLDGNPMSIDRKHKSLALIKCPPLLVTSNVDITKDDKYKYLYSRVTTLTFPNPFPFDRNGNAVYELSDANWKCFFTRLSASLDIQDSEDEDDGDNSQAFRCVPGTVVRTV.

The Nuclear localization signal signature appears at 83 to 85 (KRK). Residues Ser89, Ser93, and Ser107 each carry the phosphoserine; by host modification. The short motif at 106–115 (ISPRLDAIKL) is the Nuclear export signal element. Residues 145-185 (ETQVERNGEPENDCGGGGHGRDKEGEGQVHTEVHTGSQIEE) are disordered. The span at 163-185 (HGRDKEGEGQVHTEVHTGSQIEE) shows a compositional bias: basic and acidic residues. Residues 184-350 (EEHTGTTRVL…QTIVEHGLAD (167 aa)) form a DNA-binding region region. In terms of domain architecture, SF3 helicase spans 449 to 599 (IEFIPFLSKL…FPFDRNGNAV (151 aa)). 475-482 (GPPDTGKS) contacts ATP. Lys556 is covalently cross-linked (Glycyl lysine isopeptide (Lys-Gly) (interchain with G-Cter in SUMO)).

It belongs to the papillomaviridae E1 protein family. In terms of assembly, can form hexamers. Interacts with E2 protein; this interaction increases E1 DNA binding specificity. Interacts with host DNA polymerase subunit POLA2. Interacts with host single stranded DNA-binding protein RPA1. Interacts with host TOP1; this interaction stimulates the enzymatic activity of TOP1. Post-translationally, phosphorylated. In terms of processing, sumoylated.

Its subcellular location is the host nucleus. It carries out the reaction Couples ATP hydrolysis with the unwinding of duplex DNA by translocating in the 3'-5' direction.. It catalyses the reaction ATP + H2O = ADP + phosphate + H(+). Its function is as follows. ATP-dependent DNA 3'-5' helicase required for initiation of viral DNA replication. It forms a complex with the viral E2 protein. The E1-E2 complex binds to the replication origin which contains binding sites for both proteins. During the initial step, a dimer of E1 interacts with a dimer of protein E2 leading to a complex that binds the viral origin of replication with high specificity. Then, a second dimer of E1 displaces the E2 dimer in an ATP-dependent manner to form the E1 tetramer. Following this, two E1 monomers are added to each half of the site, which results in the formation of two E1 trimers on the viral ori. Subsequently, two hexamers will be created. The double hexamer acts as a bi-directional helicase machinery and unwinds the viral DNA and then recruits the host DNA polymerase to start replication. The protein is Replication protein E1 of Homo sapiens (Human).